Here is a 373-residue protein sequence, read N- to C-terminus: Opsin Rh1 (373 aa).

Residues 1–49 are Extracellular-facing; sequence MESFAVAAAQLGPHFAPLSNGSVVDKVTPDMAHLISPYWNQFPAMDPIW. An N-linked (GlcNAc...) asparagine glycan is attached at asparagine 20. The helical transmembrane segment at 50–74 threads the bilayer; sequence AKILTAYMIMIGMISWCGNGVVIYI. The Cytoplasmic segment spans residues 75 to 86; that stretch reads FATTKSLRTPAN. Residues 87-112 traverse the membrane as a helical segment; it reads LLVINLAISDFGIMITNTPMMGINLY. Topologically, residues 113 to 126 are extracellular; it reads FETWVLGPMMCDIY. A disulfide bridge links cysteine 123 with cysteine 200. Residues 127–146 form a helical membrane-spanning segment; the sequence is AGLGSAFGCSSIWSMCMISL. Residues 147–165 are Cytoplasmic-facing; that stretch reads DRYQVIVKGMAGRPMTIPL. Residues 166–189 traverse the membrane as a helical segment; the sequence is ALGKIAYIWFMSSIWCLAPAFGWS. The Extracellular portion of the chain corresponds to 190–213; the sequence is RYVPEGNLTSCGIDYLERDWNPRS. Asparagine 196 is a glycosylation site (N-linked (GlcNAc...) asparagine). Residues 214 to 241 form a helical membrane-spanning segment; sequence YLIFYSIFVYYIPLFLICYSYWFIIAAV. Residues 242–276 lie on the Cytoplasmic side of the membrane; sequence SAHEKAMREQAKKMNVKSLRSSEDAEKSAEGKLAK. A helical membrane pass occupies residues 277-300; the sequence is VALVTITLWFMAWTPYLVINCMGL. Topologically, residues 301 to 307 are extracellular; the sequence is FKFEGLT. Residues 308-332 traverse the membrane as a helical segment; the sequence is PLNTIWGACFAKSAACYNPIVYGIS. Lysine 319 carries the N6-(retinylidene)lysine modification. Residues 333–373 are Cytoplasmic-facing; the sequence is HPKYRLALKEKCPCCVFGKVDDGKSSDAQSQATASEAESKA. The segment at 354 to 373 is disordered; the sequence is DGKSSDAQSQATASEAESKA. A compositionally biased stretch (low complexity) spans 358–373; that stretch reads SDAQSQATASEAESKA.

This sequence belongs to the G-protein coupled receptor 1 family. Opsin subfamily. Post-translationally, phosphorylated on some or all of the serine and threonine residues present in the C-terminal region.

The protein resides in the cell projection. The protein localises to the rhabdomere membrane. Visual pigments are the light-absorbing molecules that mediate vision. They consist of an apoprotein, opsin, covalently linked to cis-retinal. The sequence is that of Opsin Rh1 (ninaE) from Drosophila melanogaster (Fruit fly).